The primary structure comprises 185 residues: Photosystem I assembly protein Ycf4 (185 aa).

2 consecutive transmembrane segments (helical) span residues 24 to 44 and 66 to 86; these read YIIGGMLTIGGIGFLLASISS and IIMGAYGVVANLLNFYLWYMV.

Belongs to the Ycf4 family.

The protein resides in the cellular thylakoid membrane. In terms of biological role, seems to be required for the assembly of the photosystem I complex. In Prochlorococcus marinus (strain MIT 9312), this protein is Photosystem I assembly protein Ycf4.